The chain runs to 142 residues: MPANPELLISPKQRQGGGYEQLAADFLQQQGLRLIARNWQQPKVGEIDLVLIEHGRSWNVLVFAEVRKRKLLGYGDALASITRSKQKKLIKTARYFLRHHPEYADFECRFDVVGFTERTGRSGQGEPLQSEWLQGAFLAPAW.

Belongs to the UPF0102 family.

This is UPF0102 protein PsycPRwf_0497 from Psychrobacter sp. (strain PRwf-1).